The primary structure comprises 173 residues: T-cell surface glycoprotein CD3 delta chain (173 aa).

Positions 1–21 (MEHSGILASLILIAVLPQGSP) are cleaved as a signal peptide. Over 22–105 (FKIQVTEYED…CVELDSGTMA (84 aa)) the chain is Extracellular. The cysteines at positions 37 and 73 are disulfide-linked. 3 N-linked (GlcNAc...) asparagine glycosylation sites follow: Asn38, Asn55, and Asn74. Residues 106-126 (GVIFIDLIATLLLALGVYCFA) form a helical membrane-spanning segment. Residues 127–173 (GHETGRPSGAAEVQALLKNEQLYQPLRDREDTQYSRLGGNWPRNKKS) lie on the Cytoplasmic side of the membrane. The ITAM domain occupies 138–166 (EVQALLKNEQLYQPLRDREDTQYSRLGGN). A phosphotyrosine mark is found at Tyr149 and Tyr160.

The TCR-CD3 complex is composed of a CD3D/CD3E and a CD3G/CD3E heterodimers that preferentially associate with TCRalpha and TCRbeta, respectively, to form TCRalpha/CD3E/CD3G and TCRbeta/CD3G/CD3E trimers. In turn, the hexamer interacts with CD3Z homodimer to form the TCR-CD3 complex. Alternatively, TCRalpha and TCRbeta can be replaced by TCRgamma and TCRdelta. Interacts with coreceptors CD4 and CD8. Post-translationally, phosphorylated on Tyr residues after T-cell receptor triggering by LCK in association with CD4/CD8.

Its subcellular location is the membrane. Functionally, part of the TCR-CD3 complex present on T-lymphocyte cell surface that plays an essential role in adaptive immune response. When antigen presenting cells (APCs) activate T-cell receptor (TCR), TCR-mediated signals are transmitted across the cell membrane by the CD3 chains CD3D, CD3E, CD3G and CD3Z. All CD3 chains contain immunoreceptor tyrosine-based activation motifs (ITAMs) in their cytoplasmic domain. Upon TCR engagement, these motifs become phosphorylated by Src family protein tyrosine kinases LCK and FYN, resulting in the activation of downstream signaling pathways. In addition of this role of signal transduction in T-cell activation, CD3D plays an essential role in thymocyte differentiation. Indeed, participates in correct intracellular TCR-CD3 complex assembly and surface expression. In absence of a functional TCR-CD3 complex, thymocytes are unable to differentiate properly. Interacts with CD4 and CD8 and thus serves to establish a functional link between the TCR and coreceptors CD4 and CD8, which is needed for activation and positive selection of CD4 or CD8 T-cells. In Mus musculus (Mouse), this protein is T-cell surface glycoprotein CD3 delta chain (Cd3d).